The primary structure comprises 668 residues: DNA ligase (668 aa).

NAD(+)-binding positions include 37–41 (DAIYD), 86–87 (SL), and E116. Residue K118 is the N6-AMP-lysine intermediate of the active site. NAD(+) is bound by residues R139, E176, K289, and K313. Zn(2+) contacts are provided by C407, C410, C425, and C430. Residues 586 to 668 (AQSSALAGLT…RALIETREMP (83 aa)) enclose the BRCT domain.

It belongs to the NAD-dependent DNA ligase family. LigA subfamily. Requires Mg(2+) as cofactor. Mn(2+) is required as a cofactor.

It catalyses the reaction NAD(+) + (deoxyribonucleotide)n-3'-hydroxyl + 5'-phospho-(deoxyribonucleotide)m = (deoxyribonucleotide)n+m + AMP + beta-nicotinamide D-nucleotide.. Functionally, DNA ligase that catalyzes the formation of phosphodiester linkages between 5'-phosphoryl and 3'-hydroxyl groups in double-stranded DNA using NAD as a coenzyme and as the energy source for the reaction. It is essential for DNA replication and repair of damaged DNA. This chain is DNA ligase, found in Gloeobacter violaceus (strain ATCC 29082 / PCC 7421).